We begin with the raw amino-acid sequence, 129 residues long: Small ribosomal subunit protein uS11 (129 aa).

Positions 109–129 are disordered; that stretch reads VDDTPVPHNGCRPKKKFRKAS. Positions 119 to 129 are enriched in basic residues; sequence CRPKKKFRKAS.

Belongs to the universal ribosomal protein uS11 family. As to quaternary structure, part of the 30S ribosomal subunit. Interacts with proteins S7 and S18. Binds to the C-terminus of IF-3; however exactly how IF-3 interacts with the 30S subunit is unclear.

Its function is as follows. Located on the upper part of the platform of the 30S subunit, where it bridges several disparate RNA helices of the 16S rRNA. Forms part of the Shine-Dalgarno cleft in the 70S ribosome. The protein is Small ribosomal subunit protein uS11 (rpsK) of Thermus thermophilus (strain ATCC BAA-163 / DSM 7039 / HB27).